The chain runs to 337 residues: tRNA dimethylallyltransferase (337 aa).

24-31 (GPTGAGKT) lines the ATP pocket. 26–31 (TGAGKT) contacts substrate. Interaction with substrate tRNA regions lie at residues 49 to 52 (DSRQ) and 188 to 192 (QRAVR).

This sequence belongs to the IPP transferase family. As to quaternary structure, monomer. Mg(2+) is required as a cofactor.

The enzyme catalyses adenosine(37) in tRNA + dimethylallyl diphosphate = N(6)-dimethylallyladenosine(37) in tRNA + diphosphate. In terms of biological role, catalyzes the transfer of a dimethylallyl group onto the adenine at position 37 in tRNAs that read codons beginning with uridine, leading to the formation of N6-(dimethylallyl)adenosine (i(6)A). The polypeptide is tRNA dimethylallyltransferase (Nitratidesulfovibrio vulgaris (strain DSM 19637 / Miyazaki F) (Desulfovibrio vulgaris)).